The chain runs to 258 residues: Type III pantothenate kinase (258 aa).

6-13 (DAGNTRIK) lines the ATP pocket. Residues Y98 and 105–108 (GSDR) contribute to the substrate site. Residue D107 is the Proton acceptor of the active site. T131 contributes to the ATP binding site. Substrate is bound at residue T184.

The protein belongs to the type III pantothenate kinase family. In terms of assembly, homodimer. NH4(+) is required as a cofactor. The cofactor is K(+).

It is found in the cytoplasm. The enzyme catalyses (R)-pantothenate + ATP = (R)-4'-phosphopantothenate + ADP + H(+). Its pathway is cofactor biosynthesis; coenzyme A biosynthesis; CoA from (R)-pantothenate: step 1/5. Its function is as follows. Catalyzes the phosphorylation of pantothenate (Pan), the first step in CoA biosynthesis. The sequence is that of Type III pantothenate kinase from Herminiimonas arsenicoxydans.